The following is a 265-amino-acid chain: Small ribosomal subunit protein uS3 (265 aa).

In terms of domain architecture, KH type-2 spans 39–111; the sequence is IREFLNENFS…EVILNIIEVR (73 aa). The segment at 224–250 is disordered; that stretch reads FEAGNQRRGQKRRPRNDQPVKDLNKEK. Residues 238 to 250 show a composition bias toward basic and acidic residues; the sequence is RNDQPVKDLNKEK.

It belongs to the universal ribosomal protein uS3 family. Part of the 30S ribosomal subunit. Forms a tight complex with proteins S10 and S14.

Functionally, binds the lower part of the 30S subunit head. Binds mRNA in the 70S ribosome, positioning it for translation. This Acholeplasma laidlawii protein is Small ribosomal subunit protein uS3.